Here is a 46-residue protein sequence, read N- to C-terminus: Thymosin beta-a (46 aa).

A compositionally biased stretch (polar residues) spans 21 to 30 (TNTAEKNTLP). Residues 21–46 (TNTAEKNTLPTKEDIDQEKKAAEGGK) form a disordered region. Positions 31–46 (TKEDIDQEKKAAEGGK) are enriched in basic and acidic residues.

Belongs to the thymosin beta family.

The protein resides in the cytoplasm. Its subcellular location is the cytoskeleton. Its function is as follows. Plays an important role in the organization of the cytoskeleton. Binds to and sequesters actin monomers (G actin) and therefore inhibits actin polymerization. The sequence is that of Thymosin beta-a from Cyprinus carpio (Common carp).